The chain runs to 537 residues: Pheophorbide a oxygenase, chloroplastic (537 aa).

The transit peptide at 1 to 49 directs the protein to the chloroplast; sequence MSVVLLSSTSATITKSQSKKIPFLSPTTKFPLKVSISPSRSKLFHNPLR. A disordered region spans residues 51 to 77; the sequence is AAPPSVPTSDSTEEKRIEEEYGGDKEE. Over residues 62–77 the composition is skewed to basic and acidic residues; the sequence is TEEKRIEEEYGGDKEE. The Rieske domain occupies 88–200; it reads WYPVSLVEDL…TMVSQGLLFV (113 aa). The [2Fe-2S] cluster site is built by C130, H132, C150, and H153.

As to quaternary structure, interacts with HCAR, SGR1, RCCR, PPH and the LHCII complex. Part of a SGR1-CCE-LHCII complex, which acts in chlorophyll breakdown.

It is found in the plastid. The protein resides in the chloroplast thylakoid membrane. It catalyses the reaction pheophorbide a + 2 reduced [2Fe-2S]-[ferredoxin] + O2 + 2 H(+) = red chlorophyll catabolite + 2 oxidized [2Fe-2S]-[ferredoxin]. The protein operates within porphyrin-containing compound metabolism; chlorophyll degradation. Its activity is regulated as follows. Might be regulated by a phosphorylation/dephosphorylation mechanism. In terms of biological role, catalyzes the key reaction of chlorophyll catabolism, porphyrin macrocycle cleavage of pheophorbide a (pheide a) to a primary fluorescent catabolite (pFCC). Works in a two-step reaction with red chlorophyll catabolite reductase (RCCR). Creates the intermediate RCC through the opening of the porphyrin macrocycle by the introduction of one atom of molecular oxygen at the alpha-methine bridge. Seems to be specific for pheide a. Belongs to the chlorophyll catabolic enzymes (CCEs). This chain is Pheophorbide a oxygenase, chloroplastic (PAO), found in Arabidopsis thaliana (Mouse-ear cress).